The primary structure comprises 295 residues: Cytidine deaminase (295 aa).

CMP/dCMP-type deaminase domains are found at residues 48–168 and 187–295; these read TDNQ…FGPS and EDDD…YLSL. Substrate is bound at residue 89 to 91; the sequence is NME. His-102 is a Zn(2+) binding site. The Proton donor role is filled by Glu-104. The Zn(2+) site is built by Cys-129 and Cys-132.

It belongs to the cytidine and deoxycytidylate deaminase family. In terms of assembly, homodimer. Requires Zn(2+) as cofactor.

It catalyses the reaction cytidine + H2O + H(+) = uridine + NH4(+). The enzyme catalyses 2'-deoxycytidine + H2O + H(+) = 2'-deoxyuridine + NH4(+). Functionally, this enzyme scavenges exogenous and endogenous cytidine and 2'-deoxycytidine for UMP synthesis. This Vibrio vulnificus (strain CMCP6) protein is Cytidine deaminase.